Consider the following 239-residue polypeptide: Lactate utilization protein A 1 (239 aa).

The protein belongs to the LutA/YkgE family.

Is involved in L-lactate degradation and allows cells to grow with lactate as the sole carbon source. This is Lactate utilization protein A 1 from Bacillus cereus (strain AH820).